We begin with the raw amino-acid sequence, 288 residues long: Octanoyl-[GcvH]:protein N-octanoyltransferase (288 aa).

Residues 44–253 (AGGPPTFRLW…VLESAMGPQV (210 aa)) enclose the BPL/LPL catalytic domain. The Acyl-thioester intermediate role is filled by C148. The tract at residues 269–288 (GREGASETDPRRVAYGVDRP) is disordered. The segment covering 272-288 (GASETDPRRVAYGVDRP) has biased composition (basic and acidic residues).

This sequence belongs to the octanoyltransferase LipL family.

It carries out the reaction N(6)-octanoyl-L-lysyl-[glycine-cleavage complex H protein] + L-lysyl-[lipoyl-carrier protein] = N(6)-octanoyl-L-lysyl-[lipoyl-carrier protein] + L-lysyl-[glycine-cleavage complex H protein]. It participates in protein modification; protein lipoylation via endogenous pathway; protein N(6)-(lipoyl)lysine from octanoyl-[acyl-carrier-protein]. In terms of biological role, catalyzes the amidotransfer (transamidation) of the octanoyl moiety from octanoyl-GcvH to the lipoyl domain of the E2 subunit of lipoate-dependent enzymes. In Kyrpidia tusciae (strain DSM 2912 / NBRC 15312 / T2) (Bacillus tusciae), this protein is Octanoyl-[GcvH]:protein N-octanoyltransferase.